The following is a 320-amino-acid chain: Protease HtpX homolog (320 aa).

The next 2 helical transmembrane spans lie at 6-26 (TAMLLAFMTALFMFVGFLIGG) and 28-48 (AGMMIAFVIAAGMNFFSYWNS). H130 provides a ligand contact to Zn(2+). The active site involves E131. H134 contributes to the Zn(2+) binding site. The next 2 membrane-spanning stretches (helical) occupy residues 145-165 (ITATLAGAISMLGNFAFFFGG) and 173-193 (PLGFVGVLVAMIVAPLAAMLV). E202 contacts Zn(2+). The disordered stretch occupies residues 281–320 (GGMNVSTPPVRAANPSRKSRSVPDTGLGRGGSQPPKGPWS).

Belongs to the peptidase M48B family. It depends on Zn(2+) as a cofactor.

Its subcellular location is the cell inner membrane. The protein is Protease HtpX homolog of Rhizobium leguminosarum bv. trifolii (strain WSM2304).